A 335-amino-acid chain; its full sequence is Nucleoid-associated protein Ent638_2782 (335 aa).

It belongs to the YejK family.

It localises to the cytoplasm. Its subcellular location is the nucleoid. The chain is Nucleoid-associated protein Ent638_2782 from Enterobacter sp. (strain 638).